The primary structure comprises 320 residues: Cytochrome f (320 aa).

Residues 1 to 35 form the signal peptide; sequence MHTKNLFYSRTQQITQYLSALLMMVILTRTSISSA. Heme contacts are provided by Y36, C56, C59, and H60. Residues 286–306 form a helical membrane-spanning segment; it reads VQVLLFFFASIILAQIFLVLK.

It belongs to the cytochrome f family. In terms of assembly, the 4 large subunits of the cytochrome b6-f complex are cytochrome b6, subunit IV (17 kDa polypeptide, petD), cytochrome f and the Rieske protein, while the 4 small subunits are PetG, PetL, PetM and PetN. The complex functions as a dimer. The cofactor is heme.

It localises to the plastid thylakoid membrane. In terms of biological role, component of the cytochrome b6-f complex, which mediates electron transfer between photosystem II (PSII) and photosystem I (PSI), cyclic electron flow around PSI, and state transitions. In Cuscuta gronovii (Common dodder), this protein is Cytochrome f.